A 384-amino-acid polypeptide reads, in one-letter code: G protein-coupled receptor 88 (384 aa).

The Extracellular segment spans residues 1-35 (MTNSSSTSTSTTTGGSLLLLCEEEESWAGRRIPVS). Asparagine 3 is a glycosylation site (N-linked (GlcNAc...) asparagine). Residues 36–56 (LLYSGLAIGGTLANGMVIYLV) form a helical membrane-spanning segment. At 57-73 (SSFRKLQTTSNAFIVNG) the chain is on the cytoplasmic side. The chain crosses the membrane as a helical span at residues 74–94 (CAADLSVCALWMPQEAVLGLL). The Extracellular portion of the chain corresponds to 95-116 (PSGSAEPPGDWDGGGGSYRLLR). The chain crosses the membrane as a helical span at residues 117-136 (GGLLGLGLTVSLLSHCLVAL). The Cytoplasmic portion of the chain corresponds to 137–158 (NRYLLITRAPATYQVLYQRRHT). A helical transmembrane segment spans residues 159–179 (VGMLALSWALALGLVLLLPPW). The Extracellular portion of the chain corresponds to 180-195 (APKPGAEPPQVHYPAL). Residues 196 to 216 (LAAGALLAQTALLLHCYLGIV) traverse the membrane as a helical segment. Residues 217–285 (RRVRVSVKRV…RAQRRLSGLS (69 aa)) are Cytoplasmic-facing. Residues 286–306 (VLLLCCVFLLATQPLVWVSLA) traverse the membrane as a helical segment. The Extracellular portion of the chain corresponds to 307 to 310 (SGFS). A helical transmembrane segment spans residues 311 to 331 (LPVPWGVQAASWLLCCALSAL). At 332 to 384 (NPLLYTWRNEEFRRSVRSVLPGVGDAAAAAAAATAVPAMSQAQLGTRAAGQHW) the chain is on the cytoplasmic side.

Belongs to the G-protein coupled receptor 1 family. In terms of tissue distribution, expressed predominantly in the striatum.

The protein localises to the cell membrane. It is found in the cell projection. The protein resides in the cilium membrane. Its subcellular location is the cytoplasm. It localises to the nucleus. In terms of biological role, orphan G protein-coupled receptor implicated in a large repertoire of behavioral responses that engage motor activities, spatial learning, and emotional processing. May play a role in the regulation of cognitive and motor function. Couples with the heterotrimeric G protein complex of the G(i) subfamily, consisting of GNAI1, GNB1 and GNG2, thereby acting through a G(i)-mediated pathway. Plays a role in the attenuation of D1 dopamine receptor (D1R)-mediated cAMP response in ciliated cells. In on-ciliated cells, involved in the inhibition of the beta-2 adrenergic receptor (B2AR) response. The sequence is that of G protein-coupled receptor 88 (Gpr88) from Mus musculus (Mouse).